The primary structure comprises 620 residues: Chaperone protein HtpG (620 aa).

The segment at 1 to 339 (MAKHQFQTEI…SEDLPLNVSR (339 aa)) is a; substrate-binding. A b region spans residues 340-546 (ELLQENRILA…ASDPMAGMAA (207 aa)). A c region spans residues 547 to 620 (MFAQMGQEMP…RVASLATKAL (74 aa)).

The protein belongs to the heat shock protein 90 family. Homodimer.

The protein resides in the cytoplasm. Molecular chaperone. Has ATPase activity. This Sulfurovum sp. (strain NBC37-1) protein is Chaperone protein HtpG.